A 367-amino-acid chain; its full sequence is Phosphoribosylaminoimidazole-succinocarboxamide synthase (367 aa).

This sequence belongs to the SAICAR synthetase family.

The catalysed reaction is 5-amino-1-(5-phospho-D-ribosyl)imidazole-4-carboxylate + L-aspartate + ATP = (2S)-2-[5-amino-1-(5-phospho-beta-D-ribosyl)imidazole-4-carboxamido]succinate + ADP + phosphate + 2 H(+). It functions in the pathway purine metabolism; IMP biosynthesis via de novo pathway; 5-amino-1-(5-phospho-D-ribosyl)imidazole-4-carboxamide from 5-amino-1-(5-phospho-D-ribosyl)imidazole-4-carboxylate: step 1/2. This is Phosphoribosylaminoimidazole-succinocarboxamide synthase from Shewanella sp. (strain W3-18-1).